The sequence spans 374 residues: Conserved virulence factor C (374 aa).

It belongs to the CvfC family.

Required for hemolysin production. This is Conserved virulence factor C (cvfC) from Staphylococcus aureus (strain MRSA252).